The primary structure comprises 72 residues: uncharacterized protein (72 aa).

The signal sequence occupies residues 1–17 (MSLGLAIAVGIVLGVVA).

This is an uncharacterized protein from Schizosaccharomyces pombe (strain 972 / ATCC 24843) (Fission yeast).